A 364-amino-acid chain; its full sequence is tRNA-specific 2-thiouridylase MnmA 1 (364 aa).

ATP contacts are provided by residues 11-18 (GMSGGTDS) and phenylalanine 37. Residue cysteine 96 is the Nucleophile of the active site. Cysteine 96 and cysteine 193 are disulfide-bonded. Glycine 120 is a binding site for ATP. The tract at residues 142 to 144 (KDQ) is interaction with tRNA. Cysteine 193 functions as the Cysteine persulfide intermediate in the catalytic mechanism. Residues 309–310 (RY) are interaction with tRNA.

This sequence belongs to the MnmA/TRMU family.

It is found in the cytoplasm. The catalysed reaction is S-sulfanyl-L-cysteinyl-[protein] + uridine(34) in tRNA + AH2 + ATP = 2-thiouridine(34) in tRNA + L-cysteinyl-[protein] + A + AMP + diphosphate + H(+). Functionally, catalyzes the 2-thiolation of uridine at the wobble position (U34) of tRNA, leading to the formation of s(2)U34. This is tRNA-specific 2-thiouridylase MnmA 1 from Bacteroides fragilis (strain YCH46).